Here is a 151-residue protein sequence, read N- to C-terminus: UPF0208 membrane protein YPTB2595 (151 aa).

2 helical membrane-spanning segments follow: residues 46–66 and 69–89; these read FGIR…IALG and LGPA…GLWW.

Belongs to the UPF0208 family.

It localises to the cell inner membrane. The polypeptide is UPF0208 membrane protein YPTB2595 (Yersinia pseudotuberculosis serotype I (strain IP32953)).